The sequence spans 89 residues: Putative regulatory protein CLH_1161 (89 aa).

The protein belongs to the RemA family.

This Clostridium botulinum (strain Alaska E43 / Type E3) protein is Putative regulatory protein CLH_1161.